An 86-amino-acid chain; its full sequence is Progonadoliberin-2 (86 aa).

The signal sequence occupies residues 1-24 (MVSVCRLLLVAALLLCLQAQLSFS). Glutamine 25 bears the Pyrrolidone carboxylic acid mark. Glycine 34 carries the glycine amide modification.

It belongs to the GnRH family.

The protein localises to the secreted. Its function is as follows. Stimulates the secretion of gonadotropins. This Clarias gariepinus (North African catfish) protein is Progonadoliberin-2 (gnrh2).